The primary structure comprises 1029 residues: Sodium/potassium-transporting ATPase subunit alpha-4 (1029 aa).

A disordered region spans residues 1–37 (MGLWGKKGTVAPHDQSPRRRPKKGLIKKKMVKREKQK). Over 1–95 (MGLWGKKGTV…NTVTPPPTTP (95 aa)) the chain is Cytoplasmic. The span at 18–36 (RRRPKKGLIKKKMVKREKQ) shows a compositional bias: basic residues. Residues 90-92 (PPP) are interaction with phosphoinositide-3 kinase. Residues 96 to 116 (EWVKFCKQLFGGFSLLLWTGA) traverse the membrane as a helical segment. At 117–139 (ILCFVAYSIQIYFNEEPTKDNLY) the chain is on the extracellular side. The chain crosses the membrane as a helical span at residues 140-160 (LSIVLSVVVIVTGCFSYYQEA). Topologically, residues 161-296 (KSSKIMESFK…VGQTPIAAEI (136 aa)) are cytoplasmic. The segment covering 223–237 (NSSLTGESEPQSRSP) has biased composition (polar residues). Residues 223–242 (NSSLTGESEPQSRSPDFTHE) form a disordered region. Residues 297 to 316 (EHFIHLITVVAVFLGVTFFA) traverse the membrane as a helical segment. The Extracellular segment spans residues 317–328 (LSLLLGYGWLEA). A helical membrane pass occupies residues 329-346 (IIFLIGIIVANVPEGLLA). At 347–778 (TVTVCLTLTA…EEGRLIFDNL (432 aa)) the chain is on the cytoplasmic side. Residue Asp384 is the 4-aspartylphosphate intermediate of the active site. Asp723 and Asp727 together coordinate Mg(2+). A helical transmembrane segment spans residues 779–798 (KKSIMYTLTSNIPEITPFLM). Topologically, residues 799–808 (FIILGIPLPL) are extracellular. Residues 809–829 (GTITILCIDLGTDMVPAISLA) traverse the membrane as a helical segment. Residues 830-849 (YESAESDIMKRLPRNPKTDN) lie on the Cytoplasmic side of the membrane. A helical membrane pass occupies residues 850–872 (LVNHRLIGMAYGQIGMIQALAGF). At 873-924 (FTYFVILAENGFRPVDLLGIRLHWEDKYLNDLEDSYGQQWTYEQRKVVEFTC) the chain is on the extracellular side. A helical membrane pass occupies residues 925–944 (QTAFFVTIVVVQWADLIISK). Residues 945–957 (TRRNSLFQQGMRN) lie on the Cytoplasmic side of the membrane. Position 949 is a phosphoserine; by PKA (Ser949). The helical transmembrane segment at 958–976 (KVLIFGILEETLLAAFLSY) threads the bilayer. Residues 977–991 (TPGMDVALRMYPLKI) are Extracellular-facing. Residues 992 to 1012 (TWWLCAIPYSILIFVYDEIRK) traverse the membrane as a helical segment. The Cytoplasmic portion of the chain corresponds to 1013–1029 (LLIRQHPDGWVERETYY).

Belongs to the cation transport ATPase (P-type) (TC 3.A.3) family. Type IIC subfamily. As to quaternary structure, the sodium/potassium-transporting ATPase is composed of a catalytic alpha subunit, an auxiliary non-catalytic beta subunit and an additional regulatory subunit. Specifically expressed in testis. Found in very low levels in skeletal muscle. Expressed in mature sperm (at protein level).

It localises to the cell membrane. It catalyses the reaction K(+)(out) + Na(+)(in) + ATP + H2O = K(+)(in) + Na(+)(out) + ADP + phosphate + H(+). Its activity is regulated as follows. Specifically inhibited by an endogenous cardiac glycoside, ouabain. In terms of biological role, this is the catalytic component of the active enzyme, which catalyzes the hydrolysis of ATP coupled with the exchange of sodium and potassium ions across the plasma membrane. This action creates the electrochemical gradient of sodium and potassium ions, providing the energy for active transport of various nutrients. Plays a role in sperm motility. The chain is Sodium/potassium-transporting ATPase subunit alpha-4 from Homo sapiens (Human).